Here is a 239-residue protein sequence, read N- to C-terminus: Probable transcriptional regulatory protein Pnuc_0618 (239 aa).

The tract at residues 1–21 (MAGHSKWANIQHRKGRQDEKR) is disordered.

It belongs to the TACO1 family.

Its subcellular location is the cytoplasm. This is Probable transcriptional regulatory protein Pnuc_0618 from Polynucleobacter asymbioticus (strain DSM 18221 / CIP 109841 / QLW-P1DMWA-1) (Polynucleobacter necessarius subsp. asymbioticus).